Here is a 968-residue protein sequence, read N- to C-terminus: Protein translocase subunit SecA (968 aa).

ATP contacts are provided by residues Gln-99, 117–121, and Asp-631; that span reads GEGKT.

This sequence belongs to the SecA family. In terms of assembly, monomer and homodimer. Part of the essential Sec protein translocation apparatus which comprises SecA, SecYEG and auxiliary proteins SecDF. Other proteins may also be involved.

Its subcellular location is the cell inner membrane. The protein resides in the cytoplasm. It catalyses the reaction ATP + H2O + cellular proteinSide 1 = ADP + phosphate + cellular proteinSide 2.. Part of the Sec protein translocase complex. Interacts with the SecYEG preprotein conducting channel. Has a central role in coupling the hydrolysis of ATP to the transfer of proteins into and across the cell membrane, serving as an ATP-driven molecular motor driving the stepwise translocation of polypeptide chains across the membrane. The chain is Protein translocase subunit SecA from Chlamydia muridarum (strain MoPn / Nigg).